The primary structure comprises 216 residues: Uracil phosphoribosyltransferase (216 aa).

Residues arginine 85, arginine 110, and 135 to 143 (DPMVATGYS) each bind 5-phospho-alpha-D-ribose 1-diphosphate. Uracil is bound by residues isoleucine 200 and 205–207 (GDA). Aspartate 206 contacts 5-phospho-alpha-D-ribose 1-diphosphate.

This sequence belongs to the UPRTase family. Requires Mg(2+) as cofactor.

It carries out the reaction UMP + diphosphate = 5-phospho-alpha-D-ribose 1-diphosphate + uracil. It participates in pyrimidine metabolism; UMP biosynthesis via salvage pathway; UMP from uracil: step 1/1. Its activity is regulated as follows. Allosterically activated by GTP. Its function is as follows. Catalyzes the conversion of uracil and 5-phospho-alpha-D-ribose 1-diphosphate (PRPP) to UMP and diphosphate. The chain is Uracil phosphoribosyltransferase from Burkholderia pseudomallei (strain 668).